Consider the following 242-residue polypeptide: tRNA pseudouridine synthase A (242 aa).

The active-site Nucleophile is Asp-51. Residue Tyr-107 coordinates substrate.

It belongs to the tRNA pseudouridine synthase TruA family. Homodimer.

It catalyses the reaction uridine(38/39/40) in tRNA = pseudouridine(38/39/40) in tRNA. Functionally, formation of pseudouridine at positions 38, 39 and 40 in the anticodon stem and loop of transfer RNAs. In Helicobacter acinonychis (strain Sheeba), this protein is tRNA pseudouridine synthase A.